The sequence spans 323 residues: Beta-ketoacyl-[acyl-carrier-protein] synthase III (323 aa).

Residues Cys114 and His250 contribute to the active site. Positions 251 to 255 are ACP-binding; the sequence is QANIR. The active site involves Asn280.

Belongs to the thiolase-like superfamily. FabH family. In terms of assembly, homodimer.

The protein resides in the cytoplasm. It carries out the reaction malonyl-[ACP] + acetyl-CoA + H(+) = 3-oxobutanoyl-[ACP] + CO2 + CoA. Its pathway is lipid metabolism; fatty acid biosynthesis. Its function is as follows. Catalyzes the condensation reaction of fatty acid synthesis by the addition to an acyl acceptor of two carbons from malonyl-ACP. Catalyzes the first condensation reaction which initiates fatty acid synthesis and may therefore play a role in governing the total rate of fatty acid production. Possesses both acetoacetyl-ACP synthase and acetyl transacylase activities. Its substrate specificity determines the biosynthesis of branched-chain and/or straight-chain of fatty acids. The sequence is that of Beta-ketoacyl-[acyl-carrier-protein] synthase III from Ruegeria sp. (strain TM1040) (Silicibacter sp.).